The following is a 186-amino-acid chain: ADP-ribosylation factor-like protein 8B (186 aa).

The segment at residues 1–19 (MLALISRLLDWFRSLFWKE) is an intramembrane region (note=Mediates targeting to membranes). GTP contacts are provided by residues 29–35 (QYSGKTT), 71–75 (DIGGQ), and 130–133 (NKRD). A Glycyl lysine isopeptide (Lys-Gly) (interchain with G-Cter in ubiquitin) cross-link involves residue Lys-141.

This sequence belongs to the small GTPase superfamily. Arf family. Interacts with tubulin. Interacts with BORCS5; recruits ARL8B to lysosomes. Interacts with VPS41; the interaction mediates the recruitment of the HOPS complex to lysosomes. Interacts (GTP-bound form) with PLEKHM2 (via RUN domain); the interaction is required to recruit the motor protein kinesin-1 on lysosomes. Interacts (GTP-bound form) with PLEKHM1 (via RUN domain); the interaction is required for PLEKHM1 localization to lysosomes and for ARL8B function in delivery and degradation of endocytic and autophagic cargo in lysosomes. PLEKHM1 and PLEKHM2 compete for interaction with ARL8B. Interacts (GTP-bound form) with RUFY1; the interaction is required for RUFY1 endosomal location. When GTP-bound, interacts with RUFY3 and RUFY4, but not with RUFY1, nor RUFY2. In terms of processing, ubiquitinated at Lys-141 by RNF167, leading to its degradation.

Its subcellular location is the late endosome membrane. The protein localises to the lysosome membrane. It is found in the cytoplasm. It localises to the cytoskeleton. The protein resides in the spindle. Its subcellular location is the cell projection. The protein localises to the axon. It is found in the synapse. It localises to the cytolytic granule membrane. The protein resides in the early endosome membrane. It carries out the reaction GTP + H2O = GDP + phosphate + H(+). In terms of biological role, small GTPase which cycles between active GTP-bound and inactive GDP-bound states. In its active state, binds to a variety of effector proteins playing a key role in the regulation of lysosomal positioning which is important for nutrient sensing, natural killer cell-mediated cytotoxicity and antigen presentation. Along with its effectors, orchestrates lysosomal transport and fusion. Localizes specifically to lysosomal membranes and mediates anterograde lysosomal motility by recruiting PLEKHM2, which in turn recruits the motor protein kinesin-1 on lysosomes. Required for lysosomal and cytolytic granule exocytosis. Critical factor involved in NK cell-mediated cytotoxicity. Drives the polarization of cytolytic granules and microtubule-organizing centers (MTOCs) toward the immune synapse between effector NK lymphocytes and target cells. In neurons, mediates the anterograde axonal long-range transport of presynaptic lysosome-related vesicles required for presynaptic biogenesis and synaptic function. Also acts as a regulator of endosome to lysosome trafficking pathways of special significance for host defense. Recruits RUFY1 onto early endosomes regulating endosomes to trans-Golgi network proteins retrieval. Regulates cargo trafficking to lysosomes by binding to PLEKHM1 and recruiting the HOPS subunit VPS41, resulting in functional assembly of the HOPS complex on lysosomal membranes. Plays an important role in cargo delivery to lysosomes for antigen presentation and microbial killing. Directs the intersection of CD1d with lipid antigens in lysosomes, and plays a role in intersecting phagosomes with lysosomes to generate phagolysosomes that kill microbes. Involved in the process of MHC II presentation. Regulates the delivery of antigens to lysosomes and the formation of MHC II-peptide complexes through the recruitment of the HOPS complex to lysosomes allowing the fusion of late endosomes to lysosomes. May play a role in chromosome segregation. The sequence is that of ADP-ribosylation factor-like protein 8B (ARL8B) from Macaca fascicularis (Crab-eating macaque).